A 251-amino-acid chain; its full sequence is MADPTAEPVAGQSSLIRPAYSRVLLKLGGEMFGGGQVGLDPDVVAQVARQIAEVVRSGAQVAVVIGGGNFFRGAQLQQRGMDRARSDYMGMLGTVMNSLALQDFLQKEGIDTRVQTAITMGQVAEPYIPLRAVRHLEKGRVVIFGAGMGLPYFSTDTTAAQRALEIGADVVLMAKAVDGVFTADPRVDPDAELLIAISHREVIDRGLKVADATAFSLCMDNGMPILVFNLLVDGNIARAVAGEKIGTLVTT.

Residue 26–29 (KLGG) participates in ATP binding. Glycine 67 serves as a coordination point for UMP. Glycine 68 and arginine 72 together coordinate ATP. UMP-binding positions include aspartate 87 and 148 to 155 (MGLPYFST). ATP is bound by residues phenylalanine 181 and aspartate 184.

This sequence belongs to the UMP kinase family. As to quaternary structure, homohexamer.

The protein localises to the cytoplasm. It catalyses the reaction UMP + ATP = UDP + ADP. The protein operates within pyrimidine metabolism; CTP biosynthesis via de novo pathway; UDP from UMP (UMPK route): step 1/1. Its activity is regulated as follows. Inhibited by UTP. Its function is as follows. Catalyzes the reversible phosphorylation of UMP to UDP. In Mycolicibacterium vanbaalenii (strain DSM 7251 / JCM 13017 / BCRC 16820 / KCTC 9966 / NRRL B-24157 / PYR-1) (Mycobacterium vanbaalenii), this protein is Uridylate kinase.